Consider the following 105-residue polypeptide: Thioredoxin (105 aa).

Residues 1–105 (VQVISSYDQF…LQAAITQHSA (105 aa)) enclose the Thioredoxin domain. Active-site nucleophile residues include Cys29 and Cys32. A disulfide bond links Cys29 and Cys32.

Belongs to the thioredoxin family. As to quaternary structure, monomer.

Participates in various redox reactions through the reversible oxidation of its active center dithiol to a disulfide and catalyzes dithiol-disulfide exchange reactions. The polypeptide is Thioredoxin (Malassezia sympodialis (Atopic eczema-associated yeast)).